The sequence spans 98 residues: Co-chaperonin GroES (98 aa).

A disordered region spans residues 35–57 (EKPQEGKVISAGPGRVDDKGTRV).

The protein belongs to the GroES chaperonin family. Heptamer of 7 subunits arranged in a ring. Interacts with the chaperonin GroEL.

It localises to the cytoplasm. Together with the chaperonin GroEL, plays an essential role in assisting protein folding. The GroEL-GroES system forms a nano-cage that allows encapsulation of the non-native substrate proteins and provides a physical environment optimized to promote and accelerate protein folding. GroES binds to the apical surface of the GroEL ring, thereby capping the opening of the GroEL channel. This is Co-chaperonin GroES from Cutibacterium acnes (strain DSM 16379 / KPA171202) (Propionibacterium acnes).